Consider the following 221-residue polypeptide: NAD(P)H-hydrate epimerase (221 aa).

One can recognise a YjeF N-terminal domain in the interval 10 to 211 (MQQYDQYTIN…DIGIYSPAEL (202 aa)). 58-62 (NNGGD) lines the (6S)-NADPHX pocket. The K(+) site is built by Asn-59 and Asp-121. (6S)-NADPHX is bound by residues 125–131 (GIGLSKP) and Asp-154. Ser-157 contributes to the K(+) binding site.

Belongs to the NnrE/AIBP family. Requires K(+) as cofactor.

It carries out the reaction (6R)-NADHX = (6S)-NADHX. It catalyses the reaction (6R)-NADPHX = (6S)-NADPHX. Its function is as follows. Catalyzes the epimerization of the S- and R-forms of NAD(P)HX, a damaged form of NAD(P)H that is a result of enzymatic or heat-dependent hydration. This is a prerequisite for the S-specific NAD(P)H-hydrate dehydratase to allow the repair of both epimers of NAD(P)HX. This is NAD(P)H-hydrate epimerase from Weissella koreensis (strain KACC 15510).